The following is a 542-amino-acid chain: Mitogen-activated protein kinase 14 (542 aa).

A Protein kinase domain is found at 13–304 (YKIEEVIGKG…AEEALADPYF (292 aa)). Residues 19–27 (IGKGSYGVV) and Lys-42 contribute to the ATP site. Catalysis depends on Asp-139, which acts as the Proton acceptor. Phosphothreonine is present on Thr-175. The short motif at 175–177 (TDY) is the TXY element. Phosphotyrosine is present on Tyr-177. Disordered regions lie at residues 388–412 (STAAPPERQHNSLPRPCVVYSDNRP) and 482–542 (RNPA…SGHW). Polar residues predominate over residues 488–507 (PNSSVPLGSSYPRRNQTCKS).

It belongs to the protein kinase superfamily. CMGC Ser/Thr protein kinase family. MAP kinase subfamily. In terms of processing, dually phosphorylated on Thr-175 and Tyr-177, which activates the enzyme.

It catalyses the reaction L-seryl-[protein] + ATP = O-phospho-L-seryl-[protein] + ADP + H(+). The catalysed reaction is L-threonyl-[protein] + ATP = O-phospho-L-threonyl-[protein] + ADP + H(+). With respect to regulation, activated by threonine and tyrosine phosphorylation. The polypeptide is Mitogen-activated protein kinase 14 (MPK14) (Oryza sativa subsp. japonica (Rice)).